The following is a 547-amino-acid chain: Probable bifunctional tRNA threonylcarbamoyladenosine biosynthesis protein (547 aa).

The tract at residues 1–329 (MGNSNELICI…FRTDMVDVNW (329 aa)) is kae1. Residues His112, His116, and Tyr133 each coordinate Fe cation. L-threonylcarbamoyladenylate-binding positions include 133-137 (YVSGG), Asp165, Gly178, Glu182, and Asn262. Asp290 provides a ligand contact to Fe cation. The region spanning 346 to 547 (QIPRHLIGKG…KEVEKRGRYL (202 aa)) is the Protein kinase domain. Residues 352-360 (IGKGAEADI) and Lys373 contribute to the ATP site. Residue Asp465 is the Proton acceptor; for kinase activity of the active site.

The protein in the N-terminal section; belongs to the KAE1 / TsaD family. In the C-terminal section; belongs to the protein kinase superfamily. Tyr protein kinase family. BUD32 subfamily. In terms of assembly, component of the KEOPS complex that consists of Kae1, Bud32, Cgi121 and Pcc1; the whole complex dimerizes. Fe(2+) is required as a cofactor.

It localises to the cytoplasm. It carries out the reaction L-seryl-[protein] + ATP = O-phospho-L-seryl-[protein] + ADP + H(+). The catalysed reaction is L-threonyl-[protein] + ATP = O-phospho-L-threonyl-[protein] + ADP + H(+). The enzyme catalyses L-threonylcarbamoyladenylate + adenosine(37) in tRNA = N(6)-L-threonylcarbamoyladenosine(37) in tRNA + AMP + H(+). Its function is as follows. Required for the formation of a threonylcarbamoyl group on adenosine at position 37 (t(6)A37) in tRNAs that read codons beginning with adenine. Is a component of the KEOPS complex that is probably involved in the transfer of the threonylcarbamoyl moiety of threonylcarbamoyl-AMP (TC-AMP) to the N6 group of A37. The Kae1 domain likely plays a direct catalytic role in this reaction. The Bud32 domain probably displays kinase activity that regulates Kae1 function. In Methanococcus vannielii (strain ATCC 35089 / DSM 1224 / JCM 13029 / OCM 148 / SB), this protein is Probable bifunctional tRNA threonylcarbamoyladenosine biosynthesis protein.